The following is a 188-amino-acid chain: uncharacterized protein (188 aa).

The helical transmembrane segment at 121–139 (IWLYGGASLITTFINLGLV) threads the bilayer.

This sequence to B.subtilis YwjB.

It is found in the membrane. This is an uncharacterized protein from Bacillus subtilis (strain 168).